A 510-amino-acid polypeptide reads, in one-letter code: Light-independent protochlorophyllide reductase subunit B (510 aa).

Asp36 provides a ligand contact to [4Fe-4S] cluster. Residue Asp296 is the Proton donor of the active site. Substrate is bound at residue Gly431–Met432.

This sequence belongs to the ChlB/BchB/BchZ family. As to quaternary structure, protochlorophyllide reductase is composed of three subunits; ChlL, ChlN and ChlB. Forms a heterotetramer of two ChlB and two ChlN subunits. [4Fe-4S] cluster is required as a cofactor.

It carries out the reaction chlorophyllide a + oxidized 2[4Fe-4S]-[ferredoxin] + 2 ADP + 2 phosphate = protochlorophyllide a + reduced 2[4Fe-4S]-[ferredoxin] + 2 ATP + 2 H2O. Its pathway is porphyrin-containing compound metabolism; chlorophyll biosynthesis (light-independent). Component of the dark-operative protochlorophyllide reductase (DPOR) that uses Mg-ATP and reduced ferredoxin to reduce ring D of protochlorophyllide (Pchlide) to form chlorophyllide a (Chlide). This reaction is light-independent. The NB-protein (ChlN-ChlB) is the catalytic component of the complex. This chain is Light-independent protochlorophyllide reductase subunit B, found in Synechococcus sp. (strain JA-2-3B'a(2-13)) (Cyanobacteria bacterium Yellowstone B-Prime).